Here is a 1297-residue protein sequence, read N- to C-terminus: Regulator of V-ATPase in vacuolar membrane protein 1 (1297 aa).

Composition is skewed to basic and acidic residues over residues 1161–1171 (DQEIHENKDSQ) and 1260–1269 (AVEKTHDSPK). 2 disordered regions span residues 1161-1182 (DQEI…VRNK) and 1260-1297 (AVEK…FSFE).

Component of the RAVE complex composed of rav1, rav2 and skp1. Interacts with vam2.

Its subcellular location is the cytoplasm. It is found in the nucleus. The protein resides in the endomembrane system. Functionally, component of the RAVE complex which is required for stable assembly of the vacuolar ATPase complex V-ATPase. This chain is Regulator of V-ATPase in vacuolar membrane protein 1 (rav1), found in Schizosaccharomyces pombe (strain 972 / ATCC 24843) (Fission yeast).